Consider the following 194-residue polypeptide: Erythropoietin (194 aa).

An N-terminal signal peptide occupies residues 1–27 (MGARDCTPLLLLLLSFLLFPLGLPVLG). Cystine bridges form between Cys34-Cys189 and Cys56-Cys60. Asn51 is a glycosylation site (N-linked (GlcNAc...) asparagine). Asn65 and Asn110 each carry an N-linked (GlcNAc...) asparagine glycan.

This sequence belongs to the EPO/TPO family. Produced by kidney or liver of adult mammals and by liver of fetal or neonatal mammals.

Its subcellular location is the secreted. In terms of biological role, hormone involved in the regulation of erythrocyte proliferation and differentiation and the maintenance of a physiological level of circulating erythrocyte mass. Binds to EPOR leading to EPOR dimerization and JAK2 activation thereby activating specific downstream effectors, including STAT1 and STAT3. This is Erythropoietin (EPO) from Ovis aries (Sheep).